A 931-amino-acid polypeptide reads, in one-letter code: Protocadherin gamma-B2 (931 aa).

A signal peptide spans 1–30 (MKASSGRCGLVRWLQVLLPFLLSLFPGALP). Cadherin domains are found at residues 31 to 133 (VQIR…TPLF), 134 to 242 (KQTK…PPVF), 243 to 347 (SQDV…APEV), 348 to 452 (IVTS…APVF), 453 to 562 (QQTS…APRV), and 570 to 675 (DGSA…LPDL). At 31–691 (VQIRYSIPEE…SDPQAELQFY (661 aa)) the chain is on the extracellular side. Residues Asn419 and Asn545 are each glycosylated (N-linked (GlcNAc...) asparagine). A helical transmembrane segment spans residues 692–712 (LVVALALISVLFFLAVILAIS). The Cytoplasmic portion of the chain corresponds to 713–931 (LRLRRSSRSD…KKKSGKKEKK (219 aa)). 2 disordered regions span residues 814–840 (DWRF…WPNN) and 901–931 (ATLT…KEKK). Polar residues predominate over residues 815 to 840 (WRFSQAQRPGTSGSQNGDDTGTWPNN). Basic residues predominate over residues 921–931 (NKKKSGKKEKK).

Its subcellular location is the cell membrane. Its function is as follows. Potential calcium-dependent cell-adhesion protein. May be involved in the establishment and maintenance of specific neuronal connections in the brain. In Pan troglodytes (Chimpanzee), this protein is Protocadherin gamma-B2 (PCDHGB2).